Reading from the N-terminus, the 255-residue chain is Taurine import ATP-binding protein TauB (255 aa).

The ABC transporter domain occupies 2–229; that stretch reads LQISHLYADY…RFVAGESSRS (228 aa). Residue 34-41 coordinates ATP; the sequence is GPSGCGKT.

Belongs to the ABC transporter superfamily. Taurine importer (TC 3.A.1.17.1) family. As to quaternary structure, the complex is composed of two ATP-binding proteins (TauB), two transmembrane proteins (TauC) and a solute-binding protein (TauA).

The protein resides in the cell inner membrane. The enzyme catalyses taurine(out) + ATP + H2O = taurine(in) + ADP + phosphate + H(+). Its function is as follows. Part of the ABC transporter complex TauABC involved in taurine import. Responsible for energy coupling to the transport system. This chain is Taurine import ATP-binding protein TauB, found in Shigella flexneri.